Consider the following 423-residue polypeptide: Divalent metal cation transporter MntH (423 aa).

The next 11 membrane-spanning stretches (helical) occupy residues 31–51, 58–78, 116–136, 137–157, 168–188, 213–233, 254–274, 302–322, 342–362, 363–383, and 401–421; these read LMML…GNFA, SSFG…AMLI, IIAI…FQLV, FGIS…MILI, VVIG…LFFA, AAGI…SALF, IAMV…AAVF, VLFG…GTMA, FITM…TDIL, VMSQ…LLIF, and YAGV…MVTL.

It belongs to the NRAMP family.

The protein resides in the cell inner membrane. Its function is as follows. H(+)-stimulated, divalent metal cation uptake system. The sequence is that of Divalent metal cation transporter MntH from Vibrio campbellii (strain ATCC BAA-1116).